Consider the following 387-residue polypeptide: Lipid-A-disaccharide synthase (387 aa).

It belongs to the LpxB family.

It catalyses the reaction a lipid X + a UDP-2-N,3-O-bis[(3R)-3-hydroxyacyl]-alpha-D-glucosamine = a lipid A disaccharide + UDP + H(+). It functions in the pathway bacterial outer membrane biogenesis; LPS lipid A biosynthesis. Functionally, condensation of UDP-2,3-diacylglucosamine and 2,3-diacylglucosamine-1-phosphate to form lipid A disaccharide, a precursor of lipid A, a phosphorylated glycolipid that anchors the lipopolysaccharide to the outer membrane of the cell. The sequence is that of Lipid-A-disaccharide synthase from Nitrosococcus oceani (strain ATCC 19707 / BCRC 17464 / JCM 30415 / NCIMB 11848 / C-107).